The sequence spans 108 residues: Protein translation factor SUI1 (108 aa).

A disordered region spans residues 1 to 20; sequence MSIENLKSFDPFADTGDDEA.

The protein belongs to the SUI1 family.

Additional factor that functions in concert with eIF-2 and the initiator tRNA in directing the ribosome to the proper start site of translation. This is Protein translation factor SUI1 (SUI1A) from Eremothecium gossypii (strain ATCC 10895 / CBS 109.51 / FGSC 9923 / NRRL Y-1056) (Yeast).